Consider the following 238-residue polypeptide: Fatty acid metabolism regulator protein (238 aa).

The HTH gntR-type domain occupies 6-74 (KGPASFAEKY…HGKPTRVNNF (69 aa)). Residues 34-53 (ERELSELIGVTRTTLREVLQ) constitute a DNA-binding region (H-T-H motif).

As to quaternary structure, homodimer.

The protein localises to the cytoplasm. Functionally, multifunctional regulator of fatty acid metabolism. The protein is Fatty acid metabolism regulator protein of Shewanella baltica (strain OS155 / ATCC BAA-1091).